A 449-amino-acid polypeptide reads, in one-letter code: Trigger factor (449 aa).

The region spanning 162–243 (GEFVTINITA…ITATKQRELP (82 aa)) is the PPIase FKBP-type domain. The span at 428 to 437 (GNEIDPKEYF) shows a compositional bias: basic and acidic residues. The segment at 428–449 (GNEIDPKEYFGEEEVAETESEA) is disordered. The segment covering 438–449 (GEEEVAETESEA) has biased composition (acidic residues).

This sequence belongs to the FKBP-type PPIase family. Tig subfamily.

It localises to the cytoplasm. It catalyses the reaction [protein]-peptidylproline (omega=180) = [protein]-peptidylproline (omega=0). Functionally, involved in protein export. Acts as a chaperone by maintaining the newly synthesized protein in an open conformation. Functions as a peptidyl-prolyl cis-trans isomerase. This Corynebacterium glutamicum (strain R) protein is Trigger factor.